The sequence spans 153 residues: SsrA-binding protein (153 aa).

Residues 131–153 (EYDKRDSIRERDDRREMDRAFKR) form a disordered region.

Belongs to the SmpB family.

It localises to the cytoplasm. Required for rescue of stalled ribosomes mediated by trans-translation. Binds to transfer-messenger RNA (tmRNA), required for stable association of tmRNA with ribosomes. tmRNA and SmpB together mimic tRNA shape, replacing the anticodon stem-loop with SmpB. tmRNA is encoded by the ssrA gene; the 2 termini fold to resemble tRNA(Ala) and it encodes a 'tag peptide', a short internal open reading frame. During trans-translation Ala-aminoacylated tmRNA acts like a tRNA, entering the A-site of stalled ribosomes, displacing the stalled mRNA. The ribosome then switches to translate the ORF on the tmRNA; the nascent peptide is terminated with the 'tag peptide' encoded by the tmRNA and targeted for degradation. The ribosome is freed to recommence translation, which seems to be the essential function of trans-translation. This is SsrA-binding protein from Parabacteroides distasonis (strain ATCC 8503 / DSM 20701 / CIP 104284 / JCM 5825 / NCTC 11152).